The chain runs to 406 residues: Acetylornithine/succinyldiaminopimelate aminotransferase (406 aa).

Pyridoxal 5'-phosphate is bound by residues 108-109 (GT) and F141. R144 is a binding site for N(2)-acetyl-L-ornithine. 226-229 (DEVQ) contributes to the pyridoxal 5'-phosphate binding site. The residue at position 255 (K255) is an N6-(pyridoxal phosphate)lysine. S283 is a binding site for N(2)-acetyl-L-ornithine. Pyridoxal 5'-phosphate is bound at residue T284.

It belongs to the class-III pyridoxal-phosphate-dependent aminotransferase family. ArgD subfamily. In terms of assembly, homodimer. Pyridoxal 5'-phosphate serves as cofactor.

The protein resides in the cytoplasm. The catalysed reaction is N(2)-acetyl-L-ornithine + 2-oxoglutarate = N-acetyl-L-glutamate 5-semialdehyde + L-glutamate. It carries out the reaction N-succinyl-(2S,6S)-2,6-diaminopimelate + 2-oxoglutarate = (S)-2-succinylamino-6-oxoheptanedioate + L-glutamate. It participates in amino-acid biosynthesis; L-arginine biosynthesis; N(2)-acetyl-L-ornithine from L-glutamate: step 4/4. The protein operates within amino-acid biosynthesis; L-lysine biosynthesis via DAP pathway; LL-2,6-diaminopimelate from (S)-tetrahydrodipicolinate (succinylase route): step 2/3. Its function is as follows. Involved in both the arginine and lysine biosynthetic pathways. The protein is Acetylornithine/succinyldiaminopimelate aminotransferase of Escherichia coli (strain K12).